The chain runs to 246 residues: 1-(5-phosphoribosyl)-5-[(5-phosphoribosylamino)methylideneamino] imidazole-4-carboxamide isomerase (246 aa).

The Proton acceptor role is filled by D8. Catalysis depends on D130, which acts as the Proton donor.

Belongs to the HisA/HisF family.

It is found in the cytoplasm. It carries out the reaction 1-(5-phospho-beta-D-ribosyl)-5-[(5-phospho-beta-D-ribosylamino)methylideneamino]imidazole-4-carboxamide = 5-[(5-phospho-1-deoxy-D-ribulos-1-ylimino)methylamino]-1-(5-phospho-beta-D-ribosyl)imidazole-4-carboxamide. It functions in the pathway amino-acid biosynthesis; L-histidine biosynthesis; L-histidine from 5-phospho-alpha-D-ribose 1-diphosphate: step 4/9. The protein is 1-(5-phosphoribosyl)-5-[(5-phosphoribosylamino)methylideneamino] imidazole-4-carboxamide isomerase of Shigella sonnei (strain Ss046).